The chain runs to 294 residues: Putative sugar lactone lactonase (294 aa).

Positions 21, 150, and 201 each coordinate a divalent metal cation. Residue Asp-201 is the Proton donor/acceptor of the active site.

It belongs to the SMP-30/CGR1 family. It depends on a divalent metal cation as a cofactor.

Its function is as follows. Involved in the degradation of galactose via the DeLey-Doudoroff pathway. The chain is Putative sugar lactone lactonase from Rhizobium meliloti (strain 1021) (Ensifer meliloti).